A 361-amino-acid polypeptide reads, in one-letter code: Mycothiol acetyltransferase (361 aa).

2 consecutive N-acetyltransferase domains span residues 25-173 and 195-361; these read PRVR…LPGS and VTVL…AWKF. Residue glutamate 59 coordinates 1D-myo-inositol 2-(L-cysteinylamino)-2-deoxy-alpha-D-glucopyranoside. Position 98–100 (98–100) interacts with acetyl-CoA; it reads LAV. Glutamate 229, lysine 280, and glutamate 295 together coordinate 1D-myo-inositol 2-(L-cysteinylamino)-2-deoxy-alpha-D-glucopyranoside. Residues 299-301 and 306-312 each bind acetyl-CoA; these read IGL and QGRGLGR. Tyrosine 333 serves as a coordination point for 1D-myo-inositol 2-(L-cysteinylamino)-2-deoxy-alpha-D-glucopyranoside. 338-343 is an acetyl-CoA binding site; that stretch reads NAPAVH.

The protein belongs to the acetyltransferase family. MshD subfamily. Monomer.

It carries out the reaction 1D-myo-inositol 2-(L-cysteinylamino)-2-deoxy-alpha-D-glucopyranoside + acetyl-CoA = mycothiol + CoA + H(+). Its function is as follows. Catalyzes the transfer of acetyl from acetyl-CoA to desacetylmycothiol (Cys-GlcN-Ins) to form mycothiol. The chain is Mycothiol acetyltransferase from Corynebacterium kroppenstedtii (strain DSM 44385 / JCM 11950 / CIP 105744 / CCUG 35717).